The primary structure comprises 189 residues: GTP cyclohydrolase 1 (189 aa).

Zn(2+) is bound by residues C79, H82, and C151.

The protein belongs to the GTP cyclohydrolase I family. In terms of assembly, toroid-shaped homodecamer, composed of two pentamers of five dimers.

It carries out the reaction GTP + H2O = 7,8-dihydroneopterin 3'-triphosphate + formate + H(+). It participates in cofactor biosynthesis; 7,8-dihydroneopterin triphosphate biosynthesis; 7,8-dihydroneopterin triphosphate from GTP: step 1/1. The protein is GTP cyclohydrolase 1 of Lactiplantibacillus plantarum (strain ATCC BAA-793 / NCIMB 8826 / WCFS1) (Lactobacillus plantarum).